The sequence spans 123 residues: Small ribosomal subunit protein uS12 (123 aa).

3-methylthioaspartic acid is present on Asp89. Residues 104 to 123 (TQGVKDRRQRRSKYGAKRPK) are disordered. The span at 110-123 (RRQRRSKYGAKRPK) shows a compositional bias: basic residues.

Belongs to the universal ribosomal protein uS12 family. As to quaternary structure, part of the 30S ribosomal subunit. Contacts proteins S8 and S17. May interact with IF1 in the 30S initiation complex.

Its function is as follows. With S4 and S5 plays an important role in translational accuracy. In terms of biological role, interacts with and stabilizes bases of the 16S rRNA that are involved in tRNA selection in the A site and with the mRNA backbone. Located at the interface of the 30S and 50S subunits, it traverses the body of the 30S subunit contacting proteins on the other side and probably holding the rRNA structure together. The combined cluster of proteins S8, S12 and S17 appears to hold together the shoulder and platform of the 30S subunit. In Parvibaculum lavamentivorans (strain DS-1 / DSM 13023 / NCIMB 13966), this protein is Small ribosomal subunit protein uS12.